The following is a 338-amino-acid chain: Ketol-acid reductoisomerase (NADP(+)) (338 aa).

The 181-residue stretch at 1 to 181 (MNVYYDRDCD…GGGRTGIIET (181 aa)) folds into the KARI N-terminal Rossmann domain. NADP(+)-binding positions include 24–27 (YGSQ), arginine 47, serine 50, serine 52, and 82–85 (DEFQ). Histidine 107 is an active-site residue. NADP(+) is bound at residue glycine 133. The KARI C-terminal knotted domain maps to 182-327 (TFKDETETDL…GNLRAMMPWI (146 aa)). Mg(2+)-binding residues include aspartate 190, glutamate 194, glutamate 226, and glutamate 230. Serine 251 contacts substrate.

This sequence belongs to the ketol-acid reductoisomerase family. Mg(2+) is required as a cofactor.

It carries out the reaction (2R)-2,3-dihydroxy-3-methylbutanoate + NADP(+) = (2S)-2-acetolactate + NADPH + H(+). It catalyses the reaction (2R,3R)-2,3-dihydroxy-3-methylpentanoate + NADP(+) = (S)-2-ethyl-2-hydroxy-3-oxobutanoate + NADPH + H(+). It functions in the pathway amino-acid biosynthesis; L-isoleucine biosynthesis; L-isoleucine from 2-oxobutanoate: step 2/4. It participates in amino-acid biosynthesis; L-valine biosynthesis; L-valine from pyruvate: step 2/4. Functionally, involved in the biosynthesis of branched-chain amino acids (BCAA). Catalyzes an alkyl-migration followed by a ketol-acid reduction of (S)-2-acetolactate (S2AL) to yield (R)-2,3-dihydroxy-isovalerate. In the isomerase reaction, S2AL is rearranged via a Mg-dependent methyl migration to produce 3-hydroxy-3-methyl-2-ketobutyrate (HMKB). In the reductase reaction, this 2-ketoacid undergoes a metal-dependent reduction by NADPH to yield (R)-2,3-dihydroxy-isovalerate. The sequence is that of Ketol-acid reductoisomerase (NADP(+)) from Trichlorobacter lovleyi (strain ATCC BAA-1151 / DSM 17278 / SZ) (Geobacter lovleyi).